The following is a 291-amino-acid chain: Small ribosomal subunit protein uS2 (291 aa).

Residues 238–247 (DEESGDELDE) show a composition bias toward acidic residues. A disordered region spans residues 238–291 (DEESGDELDESVSLHEEGREITDYENYTPPEEREYSVNDEGDVFDEDESLYEGR). Residues 249 to 259 (VSLHEEGREIT) show a composition bias toward basic and acidic residues. A compositionally biased stretch (acidic residues) spans 274-291 (VNDEGDVFDEDESLYEGR).

It belongs to the universal ribosomal protein uS2 family.

This Treponema pallidum (strain Nichols) protein is Small ribosomal subunit protein uS2 (rpsB).